A 1035-amino-acid chain; its full sequence is Electrogenic sodium bicarbonate cotransporter 1 (1035 aa).

The Cytoplasmic portion of the chain corresponds to 1 to 421; the sequence is MSSEKECLEN…FASDFYDALS (421 aa). Over residues 192–217 the composition is skewed to polar residues; it reads SRLFSTPDNGSPTMTHRNLTSTSLND. Disordered regions lie at residues 192–222 and 348–389; these read SRLF…SDKP and IEPP…GDSE. Over residues 376 to 389 the composition is skewed to basic and acidic residues; it reads APHDDGGGGHGDSE. A helical membrane pass occupies residues 422–446; the sequence is IQSLSAILFIYLGTVTNAITFGGLL. Over 447-456 the chain is Extracellular; sequence GDATENMQGV. Residues 457 to 475 form a helical membrane-spanning segment; that stretch reads LESFLGTAVSGAVFCLFGG. Residue glutamine 476 is a topological domain, cytoplasmic. The chain crosses the membrane as a discontinuously helical span at residues 477–497; it reads PLTILSSTGPVLVFERLLFNF. At 498-505 the chain is on the extracellular side; that stretch reads SKDNDFDY. The helical transmembrane segment at 506-526 threads the bilayer; that stretch reads LEFRLWIGLWSAFQCLILVAT. At 527–540 the chain is on the cytoplasmic side; it reads DASFLVKYFTRFTE. The chain crosses the membrane as a helical span at residues 541-564; it reads EGFSSLISFIFIYDAFKKMIKLAD. Residues 565-648 lie on the Extracellular side of the membrane; the sequence is YYPINSHFKV…GSNCKYVPDI (84 aa). N-linked (GlcNAc...) asparagine glycans are attached at residues asparagine 591, asparagine 596, asparagine 609, and asparagine 617. The helical transmembrane segment at 649–666 threads the bilayer; that stretch reads TLMSFILFLGTYTCSMAL. Topologically, residues 667-681 are cytoplasmic; it reads KKFKTSRYFPTTARK. A helical transmembrane segment spans residues 682 to 701; that stretch reads LISDFAIILSILIFCGLDAL. Over 702–735 the chain is Extracellular; that stretch reads LGVDTPKLIVPSEFKPTSPNRGWFVPPFGGNPWW. Residues 736–763 traverse the membrane as a helical segment; it reads VYLAAAIPALLVTILIFMDQQITGVIVN. Over 764–775 the chain is Cytoplasmic; it reads RKEHKLKKGAGY. The helical transmembrane segment at 776–792 threads the bilayer; it reads HLDLFWVAILMVVCSFM. A topological domain (extracellular) is located at residue alanine 793. A discontinuously helical transmembrane segment spans residues 794 to 811; sequence LPWYVAATVISIAHIDSL. The Cytoplasmic segment spans residues 812 to 833; sequence KMETETSAPGEQPKFLGVREQR. A helical membrane pass occupies residues 834–850; the sequence is VTGTVVFLLTGLSVFMA. Over 851 to 857 the chain is Extracellular; that stretch reads PILKFIP. A helical membrane pass occupies residues 858–874; the sequence is MPVLYGVFLYMGVASLN. Over 875–916 the chain is Cytoplasmic; sequence GVQFMDRLKLLLMPPKYQPDFIYLRHVPLRRVHLFTFLQVVC. The discontinuously helical intramembrane region spans 917–942; that stretch reads LAMLWILKSTVAAIIFPVMILALVAV. Over 943–1035 the chain is Cytoplasmic; that stretch reads RKAMDYFFSQ…PTFLERHTSC (93 aa). Residues 968 to 1035 are disordered; that stretch reads KKKEDEKKKK…PTFLERHTSC (68 aa). The segment covering 1007-1035 has biased composition (basic and acidic residues); the sequence is IMEKEPFLIDSKPSDRENSPTFLERHTSC.

Belongs to the anion exchanger (TC 2.A.31) family. In terms of assembly, homodimer. As to expression, expressed in kidney and to a lower extent in bladder, brain, intestine, large intestine and eye.

The protein localises to the basolateral cell membrane. It is found in the cell membrane. It catalyses the reaction 2 hydrogencarbonate(out) + Na(+)(out) = 2 hydrogencarbonate(in) + Na(+)(in). The catalysed reaction is 3 hydrogencarbonate(out) + Na(+)(out) = 3 hydrogencarbonate(in) + Na(+)(in). Functionally, electrogenic sodium/bicarbonate cotransporter with a Na(+):HCO3(-) stoichiometry varying from 1:2 to 1:3. May regulate bicarbonate influx/efflux at the basolateral membrane of cells and regulate intracellular pH. The chain is Electrogenic sodium bicarbonate cotransporter 1 (SLC4A4) from Ambystoma tigrinum (Eastern tiger salamander).